The following is a 432-amino-acid chain: D-amino acid dehydrogenase (432 aa).

3 to 17 (VVILGSGVVGVTSAW) provides a ligand contact to FAD.

It belongs to the DadA oxidoreductase family. FAD is required as a cofactor.

The enzyme catalyses a D-alpha-amino acid + A + H2O = a 2-oxocarboxylate + AH2 + NH4(+). Its pathway is amino-acid degradation; D-alanine degradation; NH(3) and pyruvate from D-alanine: step 1/1. In terms of biological role, oxidative deamination of D-amino acids. This is D-amino acid dehydrogenase from Salmonella dublin (strain CT_02021853).